A 562-amino-acid polypeptide reads, in one-letter code: Arginine--tRNA ligase (562 aa).

A 'HIGH' region motif is present at residues 126–136 (ANPTGPLNVGH).

Belongs to the class-I aminoacyl-tRNA synthetase family. In terms of assembly, monomer.

The protein resides in the cytoplasm. The enzyme catalyses tRNA(Arg) + L-arginine + ATP = L-arginyl-tRNA(Arg) + AMP + diphosphate. This chain is Arginine--tRNA ligase, found in Salinibacter ruber (strain DSM 13855 / M31).